Reading from the N-terminus, the 404-residue chain is Succinyl-diaminopimelate desuccinylase (404 aa).

A Zn(2+)-binding site is contributed by H80. The active site involves D82. A Zn(2+)-binding site is contributed by D113. E147 (proton acceptor) is an active-site residue. Positions 148, 176, and 373 each coordinate Zn(2+).

The protein belongs to the peptidase M20A family. DapE subfamily. Homodimer. Requires Zn(2+) as cofactor. Co(2+) is required as a cofactor.

It carries out the reaction N-succinyl-(2S,6S)-2,6-diaminopimelate + H2O = (2S,6S)-2,6-diaminopimelate + succinate. It functions in the pathway amino-acid biosynthesis; L-lysine biosynthesis via DAP pathway; LL-2,6-diaminopimelate from (S)-tetrahydrodipicolinate (succinylase route): step 3/3. Its function is as follows. Catalyzes the hydrolysis of N-succinyl-L,L-diaminopimelic acid (SDAP), forming succinate and LL-2,6-diaminopimelate (DAP), an intermediate involved in the bacterial biosynthesis of lysine and meso-diaminopimelic acid, an essential component of bacterial cell walls. This chain is Succinyl-diaminopimelate desuccinylase, found in Allorhizobium ampelinum (strain ATCC BAA-846 / DSM 112012 / S4) (Agrobacterium vitis (strain S4)).